The chain runs to 346 residues: Glycerol-1-phosphate dehydrogenase [NAD(P)+] (346 aa).

NAD(+) is bound by residues 93-97 (GSIID) and 115-118 (TTAS). Residue D120 coordinates substrate. Residue S124 participates in NAD(+) binding. D167 lines the substrate pocket. Positions 167 and 247 each coordinate Zn(2+). Residue H251 coordinates substrate. H263 contacts Zn(2+).

It belongs to the glycerol-1-phosphate dehydrogenase family. Zn(2+) is required as a cofactor.

The protein localises to the cytoplasm. The catalysed reaction is sn-glycerol 1-phosphate + NAD(+) = dihydroxyacetone phosphate + NADH + H(+). It carries out the reaction sn-glycerol 1-phosphate + NADP(+) = dihydroxyacetone phosphate + NADPH + H(+). It participates in membrane lipid metabolism; glycerophospholipid metabolism. Catalyzes the NAD(P)H-dependent reduction of dihydroxyacetonephosphate (DHAP or glycerone phosphate) to glycerol 1-phosphate (G1P). The G1P thus generated is used as the glycerophosphate backbone of phospholipids in the cellular membranes of Archaea. The sequence is that of Glycerol-1-phosphate dehydrogenase [NAD(P)+] from Pyrococcus abyssi (strain GE5 / Orsay).